Reading from the N-terminus, the 92-residue chain is Putative regulatory protein CKL_1364 (92 aa).

This sequence belongs to the RemA family.

The chain is Putative regulatory protein CKL_1364 from Clostridium kluyveri (strain ATCC 8527 / DSM 555 / NBRC 12016 / NCIMB 10680 / K1).